We begin with the raw amino-acid sequence, 486 residues long: MPRPAPARRLPGLLLLLWPLLLLPSAAPDPVARPGFRRLETRGPGGSPGRRPSPAAPDGAPASGTSEPGRARGAGVCKSRPLDLVFIIDSSRSVRPLEFTKVKTFVSRIIDTLDIGPADTRVAVVNYASTVKIEFQLQAYTDKQSLKQAVGRITPLSTGTMSGLAIQTAMDEAFTVEAGAREPSSNIPKVAIIVTDGRPQDQVNEVAARAQASGIELYAVGVDRADMASLKMMASEPLEEHVFYVETYGVIEKLSSRFQETFCALDPCVLGTHQCQHVCISDGEGKHHCECSQGYTLNADKKTCSALDRCALNTHGCEHICVNDRSGSYHCECYEGYTLNEDRKTCSAQDKCALGTHGCQHICVNDRTGSHHCECYEGYTLNADKKTCSVRDKCALGSHGCQHICVSDGAASYHCDCYPGYTLNEDKKTCSATEEARRLVSTEDACGCEATLAFQDKVSSYLQRLNTKLDDILEKLKINEYGQIHR.

An N-terminal signal peptide occupies residues 1–28; that stretch reads MPRPAPARRLPGLLLLLWPLLLLPSAAP. The segment at 32 to 75 is disordered; sequence ARPGFRRLETRGPGGSPGRRPSPAAPDGAPASGTSEPGRARGAG. The segment covering 49–64 has biased composition (low complexity); the sequence is GRRPSPAAPDGAPASG. Residues 83–258 form the VWFA domain; it reads DLVFIIDSSR…GVIEKLSSRF (176 aa). The residue at position 198 (Arg198) is an Omega-N-methylarginine. 4 consecutive EGF-like domains span residues 264 to 305, 306 to 347, 348 to 389, and 390 to 431; these read ALDP…KTCS, ALDR…KTCS, AQDK…KTCS, and VRDK…KTCS. Cystine bridges form between Cys268/Cys279, Cys275/Cys289, Cys291/Cys304, Cys310/Cys321, Cys317/Cys331, Cys333/Cys346, Cys352/Cys363, Cys359/Cys373, Cys375/Cys388, Cys394/Cys405, Cys401/Cys415, and Cys417/Cys430. A Phosphoserine; by FAM20C modification is found at Ser441. A Phosphothreonine; by FAM20C modification is found at Thr442. The stretch at 456–480 forms a coiled coil; it reads DKVSSYLQRLNTKLDDILEKLKINE.

In terms of assembly, can form homooligomers (monomers, dimers, trimers and tetramers) and heterooligomers with matrilin-1. Interacts with COMP. Component of a complex containing at least CRELD2, MANF, MATN3 and PDIA4. Expressed only in cartilaginous tissues, such as vertebrae, ribs and shoulders.

The protein localises to the secreted. In terms of biological role, major component of the extracellular matrix of cartilage and may play a role in the formation of extracellular filamentous networks. This chain is Matrilin-3 (MATN3), found in Homo sapiens (Human).